We begin with the raw amino-acid sequence, 26 residues long: Dermaseptin-J4 (26 aa).

Position 26 is a valine amide (Val26).

In terms of tissue distribution, expressed by the skin glands.

Its subcellular location is the secreted. Its function is as follows. Has antimicrobial activity. The sequence is that of Dermaseptin-J4 from Phasmahyla jandaia (Jandaia leaf frog).